A 469-amino-acid polypeptide reads, in one-letter code: Argininosuccinate lyase (469 aa).

This sequence belongs to the lyase 1 family. Argininosuccinate lyase subfamily.

Its subcellular location is the cytoplasm. It carries out the reaction 2-(N(omega)-L-arginino)succinate = fumarate + L-arginine. It participates in amino-acid biosynthesis; L-arginine biosynthesis; L-arginine from L-ornithine and carbamoyl phosphate: step 3/3. In Mycolicibacterium smegmatis (strain ATCC 700084 / mc(2)155) (Mycobacterium smegmatis), this protein is Argininosuccinate lyase.